The primary structure comprises 89 residues: Small ribosomal subunit protein uS15 (89 aa).

Belongs to the universal ribosomal protein uS15 family. As to quaternary structure, part of the 30S ribosomal subunit. Forms a bridge to the 50S subunit in the 70S ribosome, contacting the 23S rRNA.

Functionally, one of the primary rRNA binding proteins, it binds directly to 16S rRNA where it helps nucleate assembly of the platform of the 30S subunit by binding and bridging several RNA helices of the 16S rRNA. Its function is as follows. Forms an intersubunit bridge (bridge B4) with the 23S rRNA of the 50S subunit in the ribosome. The chain is Small ribosomal subunit protein uS15 from Marinobacter nauticus (strain ATCC 700491 / DSM 11845 / VT8) (Marinobacter aquaeolei).